The sequence spans 306 residues: UDP-3-O-acyl-N-acetylglucosamine deacetylase (306 aa).

The Zn(2+) site is built by H78, H237, and D241. Catalysis depends on H264, which acts as the Proton donor.

This sequence belongs to the LpxC family. Zn(2+) serves as cofactor.

It carries out the reaction a UDP-3-O-[(3R)-3-hydroxyacyl]-N-acetyl-alpha-D-glucosamine + H2O = a UDP-3-O-[(3R)-3-hydroxyacyl]-alpha-D-glucosamine + acetate. It functions in the pathway glycolipid biosynthesis; lipid IV(A) biosynthesis; lipid IV(A) from (3R)-3-hydroxytetradecanoyl-[acyl-carrier-protein] and UDP-N-acetyl-alpha-D-glucosamine: step 2/6. Functionally, catalyzes the hydrolysis of UDP-3-O-myristoyl-N-acetylglucosamine to form UDP-3-O-myristoylglucosamine and acetate, the committed step in lipid A biosynthesis. The chain is UDP-3-O-acyl-N-acetylglucosamine deacetylase from Aromatoleum aromaticum (strain DSM 19018 / LMG 30748 / EbN1) (Azoarcus sp. (strain EbN1)).